The following is a 465-amino-acid chain: Methylenetetrahydrofolate--tRNA-(uracil-5-)-methyltransferase TrmFO (465 aa).

3 to 8 is a binding site for FAD; the sequence is GAGLAG.

Belongs to the MnmG family. TrmFO subfamily. The cofactor is FAD.

The protein resides in the cytoplasm. It carries out the reaction uridine(54) in tRNA + (6R)-5,10-methylene-5,6,7,8-tetrahydrofolate + NADH + H(+) = 5-methyluridine(54) in tRNA + (6S)-5,6,7,8-tetrahydrofolate + NAD(+). It catalyses the reaction uridine(54) in tRNA + (6R)-5,10-methylene-5,6,7,8-tetrahydrofolate + NADPH + H(+) = 5-methyluridine(54) in tRNA + (6S)-5,6,7,8-tetrahydrofolate + NADP(+). Functionally, catalyzes the folate-dependent formation of 5-methyl-uridine at position 54 (M-5-U54) in all tRNAs. In Bradyrhizobium sp. (strain ORS 278), this protein is Methylenetetrahydrofolate--tRNA-(uracil-5-)-methyltransferase TrmFO.